The chain runs to 70 residues: UPF0270 protein VIBHAR_00073 (70 aa).

Belongs to the UPF0270 family.

The polypeptide is UPF0270 protein VIBHAR_00073 (Vibrio campbellii (strain ATCC BAA-1116)).